We begin with the raw amino-acid sequence, 198 residues long: Probable GTP-binding protein EngB (198 aa).

An EngB-type G domain is found at 27-198 (DLPEVALAGR…ESWDTILSEL (172 aa)). GTP is bound by residues 35–42 (GRSNVGKS), 62–66 (GKTQL), 80–83 (DVPG), 147–150 (TKAD), and 179–181 (FSS). Positions 42 and 64 each coordinate Mg(2+).

Belongs to the TRAFAC class TrmE-Era-EngA-EngB-Septin-like GTPase superfamily. EngB GTPase family. It depends on Mg(2+) as a cofactor.

Its function is as follows. Necessary for normal cell division and for the maintenance of normal septation. The sequence is that of Probable GTP-binding protein EngB from Streptococcus agalactiae serotype III (strain NEM316).